The following is a 78-amino-acid chain: Acyl carrier protein (78 aa).

The Carrier domain maps to 2–77; sequence SDIEARVKKI…NAIDYANTHQ (76 aa). The residue at position 37 (S37) is an O-(pantetheine 4'-phosphoryl)serine.

This sequence belongs to the acyl carrier protein (ACP) family. Post-translationally, 4'-phosphopantetheine is transferred from CoA to a specific serine of apo-ACP by AcpS. This modification is essential for activity because fatty acids are bound in thioester linkage to the sulfhydryl of the prosthetic group.

Its subcellular location is the cytoplasm. The protein operates within lipid metabolism; fatty acid biosynthesis. Carrier of the growing fatty acid chain in fatty acid biosynthesis. This chain is Acyl carrier protein, found in Comamonas testosteroni (Pseudomonas testosteroni).